The chain runs to 305 residues: Fumarylacetoacetate hydrolase domain-containing protein 2 homolog (305 aa).

Residues E141, E143, and D172 each contribute to the a divalent metal cation site.

This sequence belongs to the FAH family. The cofactor is Ca(2+). Requires Mg(2+) as cofactor.

Functionally, may have hydrolase activity. This chain is Fumarylacetoacetate hydrolase domain-containing protein 2 homolog (fahd2), found in Dictyostelium discoideum (Social amoeba).